Reading from the N-terminus, the 301-residue chain is Probable alpha-L-glutamate ligase (301 aa).

The region spanning 104 to 287 (LQLLSRRGIG…VAGIIIEHIE (184 aa)) is the ATP-grasp domain. ATP is bound by residues K141, 178–179 (EY), D187, and 211–213 (RSN). Mg(2+)-binding residues include D248, E260, and N262. Mn(2+)-binding residues include D248, E260, and N262.

The protein belongs to the RimK family. The cofactor is Mg(2+). Requires Mn(2+) as cofactor.

The protein is Probable alpha-L-glutamate ligase of Pseudomonas fluorescens (strain ATCC BAA-477 / NRRL B-23932 / Pf-5).